The chain runs to 168 residues: Peptide deformylase (168 aa).

Cys-91 and His-133 together coordinate Fe cation. The active site involves Glu-134. His-137 contributes to the Fe cation binding site.

Belongs to the polypeptide deformylase family. It depends on Fe(2+) as a cofactor.

The enzyme catalyses N-terminal N-formyl-L-methionyl-[peptide] + H2O = N-terminal L-methionyl-[peptide] + formate. In terms of biological role, removes the formyl group from the N-terminal Met of newly synthesized proteins. Requires at least a dipeptide for an efficient rate of reaction. N-terminal L-methionine is a prerequisite for activity but the enzyme has broad specificity at other positions. This Endomicrobium trichonymphae protein is Peptide deformylase.